The following is a 308-amino-acid chain: Malate dehydrogenase (308 aa).

NAD(+) is bound by residues glycine 6–glycine 11 and aspartate 31. The substrate site is built by arginine 80 and arginine 86. NAD(+) contacts are provided by residues asparagine 93 and threonine 116–asparagine 118. Residues asparagine 118 and arginine 149 each contribute to the substrate site. Residue histidine 173 is the Proton acceptor of the active site.

This sequence belongs to the LDH/MDH superfamily.

It carries out the reaction (S)-malate + NAD(+) = oxaloacetate + NADH + H(+). In terms of biological role, catalyzes the reversible oxidation of malate to oxaloacetate. The sequence is that of Malate dehydrogenase (mdh) from Thermoproteus tenax (strain ATCC 35583 / DSM 2078 / JCM 9277 / NBRC 100435 / Kra 1).